The sequence spans 281 residues: Pantothenate synthetase (281 aa).

30–37 (MGYLHEGH) lines the ATP pocket. The Proton donor role is filled by His37. Residue Gln61 participates in (R)-pantoate binding. Gln61 contributes to the beta-alanine binding site. 147-150 (GEKD) is a binding site for ATP. Residue Gln153 coordinates (R)-pantoate. ATP is bound by residues Ile176 and 184–187 (KSSR).

Belongs to the pantothenate synthetase family. As to quaternary structure, homodimer.

It is found in the cytoplasm. It carries out the reaction (R)-pantoate + beta-alanine + ATP = (R)-pantothenate + AMP + diphosphate + H(+). It participates in cofactor biosynthesis; (R)-pantothenate biosynthesis; (R)-pantothenate from (R)-pantoate and beta-alanine: step 1/1. Its function is as follows. Catalyzes the condensation of pantoate with beta-alanine in an ATP-dependent reaction via a pantoyl-adenylate intermediate. This chain is Pantothenate synthetase, found in Clostridium botulinum (strain 657 / Type Ba4).